Consider the following 519-residue polypeptide: tRNA-2-methylthio-N(6)-dimethylallyladenosine synthase (519 aa).

The segment at 1–23 (MNEQQRKQQSQIRTEQANVDRIK) is disordered. Residues 7 to 17 (KQQSQIRTEQA) show a composition bias toward polar residues. Residues 76 to 194 (KKFLIRTYGC…LPHLVKEALF (119 aa)) form the MTTase N-terminal domain. Residues Cys85, Cys121, Cys155, Cys231, Cys235, and Cys238 each coordinate [4Fe-4S] cluster. The Radical SAM core domain maps to 217 to 450 (RKGKIKAWVN…VNKQSAASMK (234 aa)). Residues 450–513 (KDYAGKKVKV…TWSLNGVMVE (64 aa)) enclose the TRAM domain.

This sequence belongs to the methylthiotransferase family. MiaB subfamily. In terms of assembly, monomer. The cofactor is [4Fe-4S] cluster.

It is found in the cytoplasm. The enzyme catalyses N(6)-dimethylallyladenosine(37) in tRNA + (sulfur carrier)-SH + AH2 + 2 S-adenosyl-L-methionine = 2-methylsulfanyl-N(6)-dimethylallyladenosine(37) in tRNA + (sulfur carrier)-H + 5'-deoxyadenosine + L-methionine + A + S-adenosyl-L-homocysteine + 2 H(+). Its function is as follows. Catalyzes the methylthiolation of N6-(dimethylallyl)adenosine (i(6)A), leading to the formation of 2-methylthio-N6-(dimethylallyl)adenosine (ms(2)i(6)A) at position 37 in tRNAs that read codons beginning with uridine. The polypeptide is tRNA-2-methylthio-N(6)-dimethylallyladenosine synthase (Oceanobacillus iheyensis (strain DSM 14371 / CIP 107618 / JCM 11309 / KCTC 3954 / HTE831)).